Reading from the N-terminus, the 471-residue chain is Uronate isomerase (471 aa).

This sequence belongs to the metallo-dependent hydrolases superfamily. Uronate isomerase family.

It catalyses the reaction D-glucuronate = D-fructuronate. The enzyme catalyses aldehydo-D-galacturonate = keto-D-tagaturonate. It functions in the pathway carbohydrate metabolism; pentose and glucuronate interconversion. The protein is Uronate isomerase of Xanthomonas campestris pv. campestris (strain B100).